The following is a 364-amino-acid chain: Protein spindle-F (364 aa).

The tract at residues 1 to 26 (MEASAAKITPMASSMSASGSTNSPSS) is disordered. Residues 9-26 (TPMASSMSASGSTNSPSS) are compositionally biased toward low complexity. The stretch at 32 to 114 (ALQVALQTIK…GMVSNENRRL (83 aa)) forms a coiled coil. Residue S53 is modified to Phosphoserine. A disordered region spans residues 56 to 75 (EENQQLREASSRSEGAPRAN). 3 positions are modified to phosphoserine: S85, S172, and S202. The stretch at 210-243 (AKRCLDGLQELRREAMKQQQELRSVMTLLENRIA) forms a coiled coil. Phosphoserine is present on residues S264 and S270. A UBZ1-type zinc finger spans residues 310–336 (EKTCPMCGKQYSSQVSFNAFREHVEMH). The Zn(2+) site is built by C313 and C316. At S325 the chain carries Phosphoserine. Zn(2+) is bound by residues H332 and H336. S349 bears the Phosphoserine mark.

As to quaternary structure, forms homooligomers. Interacts with the dynein light chain ctp. Interacts (via C-terminus) with IKKepsilon; this leads to phosphorylation of spn-F. Forms ternary complexes with ctp and IKKepsilon; this is required for spn-F redistribution from puncta in larval neurons and for dendrite pruning. Interacts with ctp and IKKepsilon through distinct regions. Interacts (via C-terminus) with jvl. Phosphorylated by IKKepsilon. Phosphorylation is required for spn-F neuronal distribution and dendrite pruning and reduces spn-F homooligomerization. It does not lead to spn-F degradation. In terms of tissue distribution, in pupal bristles, localizes to the bristle tip throughout the elongation period (at protein level).

The protein resides in the cytoplasm. It localises to the cytoskeleton. It is found in the cell projection. Its subcellular location is the axon. The protein localises to the dendrite. The protein resides in the perikaryon. In terms of biological role, plays a role in oocyte axis determination and microtubule organization during oogenesis. Also required for polarized organization of the bristle. Required, with jvl, for activation of the kinase IKKepsilon in the germ line. Also required for localization of IKKepsilon to the distal tip of elongating bristles by acting as an adapter linking IKKepsilon and cytoplasmic dynein. Involved in dendrite pruning in larval sensory neurons during metamorphosis. The sequence is that of Protein spindle-F from Drosophila melanogaster (Fruit fly).